Here is a 365-residue protein sequence, read N- to C-terminus: MKFLLTTAQGIEDIAKREVSLLLKKLGISFQIEEKPLGIEGRLLLEAEKAYYVDEKGRKRELSISTYLNENSRLLHRVIIEIASEKFNGIEKDESEEALKRIKDFVSSLPVEQFVKVSETFAVRSFRKGDHNITSIDIARTVGEAIFERLSRFGTPLVNLDHPAVIFRAELIKDVFFLGIDTTGDSSLHKRPWRVYDHPAHLKASIANAMIELAELDGGSVLDPMCGSGTILIELALRRYSGEIIGIEKYRKHLIGAEMNALAAGVLDKIKFIQGDATQLSQYVDSVDFAISNLPYGLKIGKKSMIPDLYMKFFNELAKVLEKRGVFITTEKKAIEEAIAENGFEIIHHRVIGHGGLMVHLYVVK.

A THUMP domain is found at 69-182; sequence NENSRLLHRV…KDVFFLGIDT (114 aa). Residues 198 to 202, 228 to 230, E248, 276 to 277, and N293 each bind S-adenosyl-L-methionine; these read HPAHL, SGT, and DA.

This sequence belongs to the methyltransferase superfamily. Monomer in solution.

The protein localises to the cytoplasm. It catalyses the reaction guanosine(6) in tRNA + S-adenosyl-L-methionine = N(2)-methylguanosine(6) in tRNA + S-adenosyl-L-homocysteine + H(+). Its function is as follows. S-adenosyl-L-methionine-dependent methyltransferase that catalyzes the methylation of the guanosine nucleotide at position 6 (m2G6) in tRNA(Phe). The sequence is that of tRNA (guanine(6)-N2)-methyltransferase from Pyrococcus furiosus (strain ATCC 43587 / DSM 3638 / JCM 8422 / Vc1).